The sequence spans 33 residues: Pardaxin P-5 (33 aa).

Belongs to the pardaxin family. Monomer. In aqueous solution exists as a tetramer.

Its subcellular location is the secreted. The protein localises to the target cell membrane. Its function is as follows. Exhibits unusual shark repellent and surfactant properties. Forms voltage-dependent, ion-permeable channels in membranes. At high concentration causes cell membrane lysis. The polypeptide is Pardaxin P-5 (Pardachirus marmoratus (Finless sole)).